Reading from the N-terminus, the 604-residue chain is Kinesin-like protein KIN-14O (604 aa).

Positions 22-61 (MLNHDKDISALQEEISALRSRQRHLDHRRQEALDKLIDLK) form a coiled coil. The Kinesin motor domain occupies 63-387 (SIRVFCRVRP…LSFAKRARSI (325 aa)). 141–148 (GQTGTGKT) is an ATP binding site. The stretch at 383-443 (RARSIESSKE…EERKKLSSSA (61 aa)) forms a coiled coil. Disordered stretches follow at residues 465-511 (DSAE…KTRL) and 565-604 (SNNSIDSTAASAPRRRESFISRPAQRAPLHQHRRRMSSLT). Positions 565–574 (SNNSIDSTAA) are enriched in polar residues. Residues 593 to 604 (LHQHRRRMSSLT) are compositionally biased toward basic residues.

Belongs to the TRAFAC class myosin-kinesin ATPase superfamily. Kinesin family. KIN-14 subfamily.

The polypeptide is Kinesin-like protein KIN-14O (Oryza sativa subsp. japonica (Rice)).